The following is a 31-amino-acid chain: Large ribosomal subunit protein bL21 (31 aa).

It belongs to the bacterial ribosomal protein bL21 family. Part of the 50S ribosomal subunit. Contacts protein L20.

This protein binds to 23S rRNA in the presence of protein L20. This Streptococcus thermophilus protein is Large ribosomal subunit protein bL21 (rplU).